The chain runs to 215 residues: Pyridoxine/pyridoxamine 5'-phosphate oxidase (215 aa).

Substrate is bound by residues 8 to 11 (RQEY) and Lys-66. FMN-binding positions include 61 to 66 (RIVLLK), 76 to 77 (YT), Arg-82, Lys-83, and Gln-105. Substrate contacts are provided by Tyr-123 and Arg-127. FMN is bound by residues 140–141 (QS) and Trp-186. A substrate-binding site is contributed by 192-194 (RLH). Residue Arg-196 coordinates FMN.

This sequence belongs to the pyridoxamine 5'-phosphate oxidase family. Homodimer. It depends on FMN as a cofactor.

It carries out the reaction pyridoxamine 5'-phosphate + O2 + H2O = pyridoxal 5'-phosphate + H2O2 + NH4(+). The catalysed reaction is pyridoxine 5'-phosphate + O2 = pyridoxal 5'-phosphate + H2O2. Its pathway is cofactor metabolism; pyridoxal 5'-phosphate salvage; pyridoxal 5'-phosphate from pyridoxamine 5'-phosphate: step 1/1. It functions in the pathway cofactor metabolism; pyridoxal 5'-phosphate salvage; pyridoxal 5'-phosphate from pyridoxine 5'-phosphate: step 1/1. Functionally, catalyzes the oxidation of either pyridoxine 5'-phosphate (PNP) or pyridoxamine 5'-phosphate (PMP) into pyridoxal 5'-phosphate (PLP). The polypeptide is Pyridoxine/pyridoxamine 5'-phosphate oxidase (Salinibacter ruber (strain DSM 13855 / M31)).